A 264-amino-acid chain; its full sequence is Forkhead box protein pes-1 (264 aa).

2 disordered regions span residues 15–36 (DLDNCSSLPPTPPKTASPGNSK) and 50–93 (DSST…PTKR). The segment covering 50-64 (DSSTSSSCSVSPASS) has biased composition (low complexity). The span at 70–89 (ESVGQQQSGRNSPVSSSTES) shows a compositional bias: polar residues. The fork-head DNA-binding region spans 93 to 186 (RPKYSYNALI…ISNNCGKLRR (94 aa)).

The protein localises to the nucleus. It is found in the cytoplasm. Transcription factor. Plays a role in embryogenesis and later development, perhaps acting redundantly with forkhead protein fkh-2. In Caenorhabditis elegans, this protein is Forkhead box protein pes-1.